The chain runs to 220 residues: StAR-related lipid transfer protein 6 (220 aa).

An START domain is found at 1-208 (MDFKAIAQQT…AKDGIKAHRT (208 aa)).

In terms of biological role, may be involved in the intracellular transport of sterols or other lipids. May bind cholesterol or other sterols. In Homo sapiens (Human), this protein is StAR-related lipid transfer protein 6 (STARD6).